The primary structure comprises 370 residues: Queuine tRNA-ribosyltransferase (370 aa).

The Proton acceptor role is filled by Asp89. Substrate-binding positions include 89-93, Asp143, Gln187, and Gly214; that span reads DSGGF. Positions 245–251 are RNA binding; it reads GVGTPED. The active-site Nucleophile is Asp264. The segment at 269–273 is RNA binding; important for wobble base 34 recognition; sequence TRNAR. Zn(2+) is bound by residues Cys302, Cys304, Cys307, and His333.

This sequence belongs to the queuine tRNA-ribosyltransferase family. Homodimer. Within each dimer, one monomer is responsible for RNA recognition and catalysis, while the other monomer binds to the replacement base PreQ1. Zn(2+) serves as cofactor.

The enzyme catalyses 7-aminomethyl-7-carbaguanine + guanosine(34) in tRNA = 7-aminomethyl-7-carbaguanosine(34) in tRNA + guanine. Its pathway is tRNA modification; tRNA-queuosine biosynthesis. Its function is as follows. Catalyzes the base-exchange of a guanine (G) residue with the queuine precursor 7-aminomethyl-7-deazaguanine (PreQ1) at position 34 (anticodon wobble position) in tRNAs with GU(N) anticodons (tRNA-Asp, -Asn, -His and -Tyr). Catalysis occurs through a double-displacement mechanism. The nucleophile active site attacks the C1' of nucleotide 34 to detach the guanine base from the RNA, forming a covalent enzyme-RNA intermediate. The proton acceptor active site deprotonates the incoming PreQ1, allowing a nucleophilic attack on the C1' of the ribose to form the product. After dissociation, two additional enzymatic reactions on the tRNA convert PreQ1 to queuine (Q), resulting in the hypermodified nucleoside queuosine (7-(((4,5-cis-dihydroxy-2-cyclopenten-1-yl)amino)methyl)-7-deazaguanosine). The sequence is that of Queuine tRNA-ribosyltransferase from Azoarcus sp. (strain BH72).